Here is a 386-residue protein sequence, read N- to C-terminus: MTSHLFQTYGRRTIEFVKGTGTKVIDNKGKEYLDFTSGIGVCNLGHCHPTVLKGVQEQLDDIWHISNLFTNSLQEEVASLLTENRALDYVFFCNSGAEANEAALKLARKHTGKSLVVTCQQSFHGRTFGTMSATGQDKVKEGFGPLLPSFLHIPFNDIKALEEVMNEEVAAVMVEVVQGEGGVIPVDLSFLKEIETLCNKFGSLFIIDEVQTGIGRTGTLFAYEQVGIEPDIVTVAKALGNGIPVGAMIGGKELGTSFTAGSHGSTFGGNYIAMAAAKEVLQVSKKPSFLKEVQEKGEYVLEKLQEELQHVECIQNIRGKGLMIGIECKHEVASFIEQLENEGLLVLQAGPNVIRLLPPLIVTNEELEQAVYIIKKVVCTKNVSII.

Pyridoxal 5'-phosphate-binding positions include 96 to 97 (GA) and Phe123. N(2)-acetyl-L-ornithine is bound at residue Arg126. Residue 208-211 (DEVQ) coordinates pyridoxal 5'-phosphate. Residue Lys237 is modified to N6-(pyridoxal phosphate)lysine. Ser265 is a binding site for N(2)-acetyl-L-ornithine. Thr266 lines the pyridoxal 5'-phosphate pocket.

Belongs to the class-III pyridoxal-phosphate-dependent aminotransferase family. ArgD subfamily. In terms of assembly, homodimer. Pyridoxal 5'-phosphate serves as cofactor.

Its subcellular location is the cytoplasm. It catalyses the reaction N(2)-acetyl-L-ornithine + 2-oxoglutarate = N-acetyl-L-glutamate 5-semialdehyde + L-glutamate. It participates in amino-acid biosynthesis; L-arginine biosynthesis; N(2)-acetyl-L-ornithine from L-glutamate: step 4/4. The sequence is that of Acetylornithine aminotransferase from Bacillus cereus (strain ATCC 14579 / DSM 31 / CCUG 7414 / JCM 2152 / NBRC 15305 / NCIMB 9373 / NCTC 2599 / NRRL B-3711).